A 327-amino-acid chain; its full sequence is Malate dehydrogenase (327 aa).

12–18 (GAAGQIA) serves as a coordination point for NAD(+). The substrate site is built by Arg93 and Arg99. NAD(+) contacts are provided by residues Asn106, Gln113, and 130 to 132 (VGN). Asn132 and Arg163 together coordinate substrate. His188 serves as the catalytic Proton acceptor.

Belongs to the LDH/MDH superfamily. MDH type 2 family.

It carries out the reaction (S)-malate + NAD(+) = oxaloacetate + NADH + H(+). Its function is as follows. Catalyzes the reversible oxidation of malate to oxaloacetate. This is Malate dehydrogenase from Paraburkholderia phytofirmans (strain DSM 17436 / LMG 22146 / PsJN) (Burkholderia phytofirmans).